Consider the following 841-residue polypeptide: Probable alpha-glucuronidase A (841 aa).

An N-terminal signal peptide occupies residues 1 to 20 (MRGLNLFQLILALLLSMVAA). 15 N-linked (GlcNAc...) asparagine glycosylation sites follow: N51, N76, N85, N149, N222, N279, N310, N343, N450, N465, N527, N576, N682, N723, and N732.

This sequence belongs to the glycosyl hydrolase 67 family.

It is found in the secreted. It carries out the reaction an alpha-D-glucuronoside + H2O = D-glucuronate + an alcohol. In terms of biological role, alpha-glucuronidase involved in the hydrolysis of xylan, a major structural heterogeneous polysaccharide found in plant biomass representing the second most abundant polysaccharide in the biosphere, after cellulose. Releases 4-O-methylglucuronic acid from xylan. This chain is Probable alpha-glucuronidase A (aguA), found in Aspergillus niger (strain ATCC MYA-4892 / CBS 513.88 / FGSC A1513).